Reading from the N-terminus, the 78-residue chain is Putative DPH3 homolog B (78 aa).

The DPH-type MB domain occupies 4-60 (FHDEVEIEDFQYDEDSETYFCPCPCGDNFSITKEELENGEGVAMCPGCSLIIKVIYD). Positions 26, 28, 48, and 51 each coordinate Zn(2+).

This sequence belongs to the DPH3 family.

In Homo sapiens (Human), this protein is Putative DPH3 homolog B (DPH3P1).